A 470-amino-acid polypeptide reads, in one-letter code: ATP synthase subunit beta (470 aa).

Position 156-163 (156-163 (GGAGVGKT)) interacts with ATP.

The protein belongs to the ATPase alpha/beta chains family. F-type ATPases have 2 components, CF(1) - the catalytic core - and CF(0) - the membrane proton channel. CF(1) has five subunits: alpha(3), beta(3), gamma(1), delta(1), epsilon(1). CF(0) has three main subunits: a(1), b(2) and c(9-12). The alpha and beta chains form an alternating ring which encloses part of the gamma chain. CF(1) is attached to CF(0) by a central stalk formed by the gamma and epsilon chains, while a peripheral stalk is formed by the delta and b chains.

It localises to the cell inner membrane. It carries out the reaction ATP + H2O + 4 H(+)(in) = ADP + phosphate + 5 H(+)(out). In terms of biological role, produces ATP from ADP in the presence of a proton gradient across the membrane. The catalytic sites are hosted primarily by the beta subunits. The chain is ATP synthase subunit beta from Nitratidesulfovibrio vulgaris (strain ATCC 29579 / DSM 644 / CCUG 34227 / NCIMB 8303 / VKM B-1760 / Hildenborough) (Desulfovibrio vulgaris).